Reading from the N-terminus, the 328-residue chain is MKNVFLTGGSGFLGKYIIEELISNGYKVFALSRSETSNKVLSQMGATPVMSSLHDEQGLTEAIKGCDIVIHCAAKLETNSESVQELYKDNIDATELLFNICNQSSTSSVSVFCFISSEGVIMNGENINNATEDTPYPPIEQLGWYNKSKAISEQFLLATQSSMSRMKTIVIRLPLVWGSRDNVLDYLVGLCNKFQWFWIGGGKNYLSIVHAKNASYGIRLAIEKGDNQDIFHLTDGESVQYRKFFTDRFKKKGVSTNKLHMVLPTPIALSLVWIMALIWKLFNLKGLPLLTKTGLIYSSKNFTINDDKARLKLGYTNKINYNQGMDEL.

Residue Tyr145 is the Proton acceptor of the active site. Lys149 contributes to the NAD(+) binding site. A helical transmembrane segment spans residues 259 to 279 (LHMVLPTPIALSLVWIMALIW).

This sequence belongs to the 3-beta-HSD family. Homodimer.

It localises to the endoplasmic reticulum membrane. The protein localises to the lipid droplet. It catalyses the reaction a 3beta-hydroxysteroid-4alpha-carboxylate + NADP(+) = a 3-oxosteroid + CO2 + NADPH. It carries out the reaction a 3beta-hydroxysteroid-4alpha-carboxylate + NAD(+) = a 3-oxosteroid + CO2 + NADH. The protein operates within steroid biosynthesis; zymosterol biosynthesis; zymosterol from lanosterol: step 4/6. Functionally, catalyzes the NAD(P)(+)-dependent oxidative decarboxylation of the C4 methyl groups of 4-alpha-carboxysterols in post-squalene cholesterol biosynthesis. This is Sterol-4-alpha-carboxylate 3-dehydrogenase, decarboxylating (nsdhl) from Dictyostelium discoideum (Social amoeba).